Consider the following 198-residue polypeptide: UPF0215 protein NEQ431 (198 aa).

The interval 179–198 (TKGDSSKPRAGGDSNPGPAG) is disordered.

Belongs to the UPF0215 family.

This Nanoarchaeum equitans (strain Kin4-M) protein is UPF0215 protein NEQ431.